The following is a 198-amino-acid chain: MICOS complex subunit Mic26 (198 aa).

The first 23 residues, Met1 to Ala23, serve as a signal peptide directing secretion. Asn63 carries an N-linked (GlcNAc...) asparagine glycan. The chain crosses the membrane as a helical span at residues Pro108–Ala128.

The protein belongs to the apolipoprotein O/MICOS complex subunit Mic27 family. As to quaternary structure, component of the mitochondrial contact site and cristae organizing system (MICOS) complex, composed of at least MICOS10/MIC10, CHCHD3/MIC19, CHCHD6/MIC25, APOOL/MIC27, IMMT/MIC60, APOO/MIC23/MIC26 and MICOS13/MIC13. This complex was also known under the names MINOS or MitOS complex. The MICOS complex associates with mitochondrial outer membrane proteins SAMM50, MTX1 and MTX2 (together described as components of the mitochondrial outer membrane sorting assembly machinery (SAM) complex) and DNAJC11, mitochondrial inner membrane protein TMEM11 and with HSPA9. The MICOS and SAM complexes together with DNAJC11 are part of a large protein complex spanning both membranes termed the mitochondrial intermembrane space bridging (MIB) complex. Interacts with IMMT/MIC60. Interacts with MICOS10/MIC10 and APOOL/MIC27.

It is found in the mitochondrion inner membrane. It localises to the mitochondrion. Its subcellular location is the endoplasmic reticulum membrane. The protein localises to the golgi apparatus membrane. In terms of biological role, component of the MICOS complex, a large protein complex of the mitochondrial inner membrane that plays crucial roles in the maintenance of crista junctions, inner membrane architecture, and formation of contact sites to the outer membrane. Plays a crucial role in crista junction formation and mitochondrial function. Can induce cardiac lipotoxicity by enhancing mitochondrial respiration and fatty acid metabolism in cardiac myoblasts. Promotes cholesterol efflux from macrophage cells. Detected in HDL, LDL and VLDL. Secreted by a microsomal triglyceride transfer protein (MTTP)-dependent mechanism, probably as a VLDL-associated protein that is subsequently transferred to HDL. The sequence is that of MICOS complex subunit Mic26 (Apoo) from Mus musculus (Mouse).